The chain runs to 1073 residues: Carbamoyl phosphate synthase large chain (1073 aa).

The carboxyphosphate synthetic domain stretch occupies residues 1 to 403 (MPKRTDIKSI…SLQKALRGLE (403 aa)). ATP is bound by residues arginine 129, arginine 169, glycine 175, glycine 176, glutamate 208, leucine 210, glutamate 215, glycine 241, valine 242, histidine 243, glutamine 285, and glutamate 299. One can recognise an ATP-grasp 1 domain in the interval 133 to 328 (DKAMKDIGLE…IAKIAAKLAI (196 aa)). Positions 285, 299, and 301 each coordinate Mg(2+). The Mn(2+) site is built by glutamine 285, glutamate 299, and asparagine 301. Positions 404 to 553 (VGACGLDPKV…YSTYEEECEA (150 aa)) are oligomerization domain. The interval 554-935 (NPSTRDKIMI…AFAKAQMGAS (382 aa)) is carbamoyl phosphate synthetic domain. Residues 678-869 (QQMVQRLSLL…LAMIAARVMA (192 aa)) enclose the ATP-grasp 2 domain. ATP is bound by residues arginine 714, histidine 753, leucine 755, glutamate 760, glycine 785, valine 786, histidine 787, serine 788, glutamine 828, and glutamate 840. Positions 828, 840, and 842 each coordinate Mg(2+). Positions 828, 840, and 842 each coordinate Mn(2+). One can recognise an MGS-like domain in the interval 936–1073 (EVLPTGGTAF…LQDLHAGLKA (138 aa)). Positions 936-1073 (EVLPTGGTAF…LQDLHAGLKA (138 aa)) are allosteric domain.

The protein belongs to the CarB family. Composed of two chains; the small (or glutamine) chain promotes the hydrolysis of glutamine to ammonia, which is used by the large (or ammonia) chain to synthesize carbamoyl phosphate. Tetramer of heterodimers (alpha,beta)4. Requires Mg(2+) as cofactor. Mn(2+) serves as cofactor.

The enzyme catalyses hydrogencarbonate + L-glutamine + 2 ATP + H2O = carbamoyl phosphate + L-glutamate + 2 ADP + phosphate + 2 H(+). It catalyses the reaction hydrogencarbonate + NH4(+) + 2 ATP = carbamoyl phosphate + 2 ADP + phosphate + 2 H(+). The protein operates within amino-acid biosynthesis; L-arginine biosynthesis; carbamoyl phosphate from bicarbonate: step 1/1. It functions in the pathway pyrimidine metabolism; UMP biosynthesis via de novo pathway; (S)-dihydroorotate from bicarbonate: step 1/3. In terms of biological role, large subunit of the glutamine-dependent carbamoyl phosphate synthetase (CPSase). CPSase catalyzes the formation of carbamoyl phosphate from the ammonia moiety of glutamine, carbonate, and phosphate donated by ATP, constituting the first step of 2 biosynthetic pathways, one leading to arginine and/or urea and the other to pyrimidine nucleotides. The large subunit (synthetase) binds the substrates ammonia (free or transferred from glutamine from the small subunit), hydrogencarbonate and ATP and carries out an ATP-coupled ligase reaction, activating hydrogencarbonate by forming carboxy phosphate which reacts with ammonia to form carbamoyl phosphate. This is Carbamoyl phosphate synthase large chain from Pseudomonas putida (strain ATCC 47054 / DSM 6125 / CFBP 8728 / NCIMB 11950 / KT2440).